Consider the following 246-residue polypeptide: Peroxisomal membrane protein 11A (246 aa).

Residues 1 to 93 are Cytoplasmic-facing; that stretch reads MDAFIRVANQ…LCLTLANLNR (93 aa). Residues 94-114 form a helical membrane-spanning segment; it reads VVYYICDTVLWAKSVGLTSGI. Residues 115 to 217 are Lumenal-facing; the sequence is NREKWQMRAA…LNQLGIYKSN (103 aa). The helical transmembrane segment at 218-238 threads the bilayer; the sequence is LGVVGFGGLVSSVAGLITVVY. The tract at residues 218 to 238 is required for homodimerization, interaction with PEX11G, and peroxisomal localization; sequence LGVVGFGGLVSSVAGLITVVY. The Cytoplasmic segment spans residues 239–246; the sequence is PQLKLKAR.

Belongs to the peroxin-11 family. As to quaternary structure, homodimer. Heterodimer with PEX11G. Probably interacts with COPB2 and COPA. Interacts with PEX19. Interacts with FIS1. Expressed at high levels in kidney, liver, lung, brain, and testis and at low levels in heart, spleen and skeletal muscle.

Its subcellular location is the peroxisome membrane. May be involved in peroxisomal proliferation and may regulate peroxisomes division. May mediate binding of coatomer proteins to the peroxisomal membrane. Promotes membrane protrusion and elongation on the peroxisomal surface. In Rattus norvegicus (Rat), this protein is Peroxisomal membrane protein 11A (Pex11a).